A 67-amino-acid polypeptide reads, in one-letter code: Lantibiotic Flvbeta.b (67 aa).

A propeptide spans 1 to 34 (cleaved by FlvT); sequence MDNNTKLQKLYEQLAATGSEKELDAMLDENMAGA. Serine 36 is subject to 2,3-didehydroalanine (Ser); by FlvM2. Residues threonine 39 and threonine 43 each carry the 2,3-didehydrobutyrine; by FlvM2 modification. 3 cross-links (beta-methyllanthionine (Thr-Cys); by FlvM2) span residues 50-56, 58-61, and 62-65; these read TTGFDWC, TGAC, and TYSC.

Post-translationally, contains DL-beta-methyllanthionine, when coepressed in E.coli with the flavecin synthetase FlvM2.

It is found in the secreted. Its function is as follows. Lanthionine-containing peptide antibiotic (lantibiotic) only active on Gram-positive bacteria in synergy with Flvalpha.a. Is not active in absence of Flvalpha.a, which is encoded by the same operon than Flvbeta.b. The bactericidal activity of lantibiotics is based on depolarization of energized bacterial cytoplasmic membranes, initiated by the formation of aqueous transmembrane pores. This chain is Lantibiotic Flvbeta.b, found in Ruminococcus flavefaciens.